The primary structure comprises 415 residues: MAGPNQLCIRRWTTKHVAVWLKDEGFFEYVDILCNKHRLDGITLLTLTEYDLRSPPLEIKVLGDIKRLMLSVRKLQKIHIDVLEEMGYNSDSPMGSMTPFISALQSTDWLCNGELSHDCDGPITDLNSDQYQYMNGKNKHSVRRLDPEYWKTILSCIYVFIVFGFTSFIMVIVHERVPDMQTYPPLPDIFLDSVPRIPWAFAMTEVCGMILCYIWLLVLLLHKHRSILLRRLCSLMGTVFLLRCFTMFVTSLSVPGQHLQCTGKIYGSVWEKLHRAFAIWSGFGMTLTGVHTCGDYMFSGHTVVLTMLNFFVTEYTPRSWNFLHTLSWVLNLFGIFFILAAHEHYSIDVFIAFYITTRLFLYYHTLANTRAYQQSRRARIWFPMFSFFECNVNGTVPNEYCWPFSKPAIMKRLIG.

The region spanning 12 to 78 (WTTKHVAVWL…MLSVRKLQKI (67 aa)) is the SAM domain. The next 4 helical transmembrane spans lie at 153-173 (ILSCIYVFIVFGFTSFIMVIV), 201-221 (FAMTEVCGMILCYIWLLVLLL), 232-252 (LCSLMGTVFLLRCFTMFVTSL), and 277-297 (FAIWSGFGMTLTGVHTCGDYM). His301 is an active-site residue. Residues 322–342 (FLHTLSWVLNLFGIFFILAAH) traverse the membrane as a helical segment. Catalysis depends on residues His344 and Asp348. Residues 347-367 (IDVFIAFYITTRLFLYYHTLA) traverse the membrane as a helical segment. Over 368–415 (NTRAYQQSRRARIWFPMFSFFECNVNGTVPNEYCWPFSKPAIMKRLIG) the chain is Cytoplasmic.

It belongs to the sphingomyelin synthase family.

Its subcellular location is the endoplasmic reticulum membrane. It catalyses the reaction an N-acylsphing-4-enine + a 1,2-diacyl-sn-glycero-3-phosphoethanolamine = an N-acylsphing-4-enine 1-phosphoethanolamine + a 1,2-diacyl-sn-glycerol. The catalysed reaction is an N-acylsphinganine + a 1,2-diacyl-sn-glycero-3-phosphoethanolamine = an N-acylsphinganine-1-phosphoethanolamine + a 1,2-diacyl-sn-glycerol. The enzyme catalyses an N-acyl-(4R)-4-hydroxysphinganine + a 1,2-diacyl-sn-glycero-3-phosphoethanolamine = an N-acyl-(4R)-4-hydroxysphinganine-1-phosphoethanolamine + a 1,2-diacyl-sn-glycerol. It carries out the reaction N-hexadecanoylsphinganine + a 1,2-diacyl-sn-glycero-3-phosphoethanolamine = N-hexadecanoyl-sphinganine-1-phosphoethanolamine + a 1,2-diacyl-sn-glycerol. It catalyses the reaction N-hexadecanoyl-(4R)-hydroxysphinganine + a 1,2-diacyl-sn-glycero-3-phosphoethanolamine = N-hexadecanoyl-(4R)-hydroxysphinganine-1-phosphoethanolamine + a 1,2-diacyl-sn-glycerol. Its pathway is sphingolipid metabolism. In terms of biological role, synthesizes sphingolipids through transfer of a phosphatidyl head group from a glycerophospholipid on to the primary hydroxyl of a ceramide in the lumen of the endoplasmic reticulum. Catalyzes the synthesis of ceramide phosphoethanolamines (CPEs) (such as N-acylsphing-4-enine 1-phosphoethanolamine) by transferring phosphoethanolamine head group, which is smaller and more hydrophilic than the phosphocholine (PC) headgroup transferred in the canonical sphingomyelin synthesis (SMS) reaction by SMS1 or SMS2, from a phosphatidylethanolamine (1,2-diacyl-sn-glycero-3-phosphoethanolamine, PE) to a ceramide (such as N-acylsphing-4-enine). The larger PC prevents an efficient fit in the enzyme's catalytic pocket, leading to little or no SMS activity. In vitro, in the absence of ceramide, it has PLC activity with preference for phosphatidylinositol and phosphatidic acid, but also hydrolyzes phosphatidylethanolamine. This is Sphingomyelin synthase-related protein 1 from Homo sapiens (Human).